An 88-amino-acid chain; its full sequence is Homeobox protein knotted-1-like 11 (88 aa).

The ELK domain maps to 4-24 (ELKEMLLKKYSGCLSRLRSEF). Residues 25–88 (LKKRKKGKLP…NQRKRHWKPS (64 aa)) constitute a DNA-binding region (homeobox; TALE-type).

Belongs to the TALE/KNOX homeobox family.

The protein resides in the nucleus. Its function is as follows. Probably binds to the DNA sequence 5'-TGAC-3'. In Zea mays (Maize), this protein is Homeobox protein knotted-1-like 11 (KNOX11).